We begin with the raw amino-acid sequence, 154 residues long: SsrA-binding protein (154 aa).

Residues 123–142 show a composition bias toward basic and acidic residues; the sequence is AEHDKRHTIKDRDWQREQGR. The segment at 123–154 is disordered; the sequence is AEHDKRHTIKDRDWQREQGRLMRHKVSAPHKD. The span at 143–154 shows a compositional bias: basic residues; it reads LMRHKVSAPHKD.

The protein belongs to the SmpB family.

The protein localises to the cytoplasm. In terms of biological role, required for rescue of stalled ribosomes mediated by trans-translation. Binds to transfer-messenger RNA (tmRNA), required for stable association of tmRNA with ribosomes. tmRNA and SmpB together mimic tRNA shape, replacing the anticodon stem-loop with SmpB. tmRNA is encoded by the ssrA gene; the 2 termini fold to resemble tRNA(Ala) and it encodes a 'tag peptide', a short internal open reading frame. During trans-translation Ala-aminoacylated tmRNA acts like a tRNA, entering the A-site of stalled ribosomes, displacing the stalled mRNA. The ribosome then switches to translate the ORF on the tmRNA; the nascent peptide is terminated with the 'tag peptide' encoded by the tmRNA and targeted for degradation. The ribosome is freed to recommence translation, which seems to be the essential function of trans-translation. The polypeptide is SsrA-binding protein (Leptothrix cholodnii (strain ATCC 51168 / LMG 8142 / SP-6) (Leptothrix discophora (strain SP-6))).